A 1647-amino-acid chain; its full sequence is MDVWESQHFSALLYLLQCIESNPSNPNVSSRLLIQCLESYSKDFLKFLALDPANANSRKKLESGEVELGGVINKVNEQFIQLSLTLSTQLNLDEIQCASLLQRGIEASQNLDRTPVQAALYFFFLAREQLLECLESLTRVVGLKDLESDISTALKSYLQSLCENGNNLVKTCIDTIPILDNKVSEILKSEAGGQILGVSEVVDFQEFIRLSHEAHVAELETISVILYQLAKVDLFQNSHFESLLVMLRKYDSPNKNAVLILPTLYAFIDKVLEVEYLPDQKVQLRSNSVEILQKIHQAIIQSPSQDWRSSQFKNILGIWWVTRLNATCKQIEKVPSFIDYETTIKNAANEIIQNGVFSDMITLLVYPFRQSETEGMEWAFAFKSRSRITVNWSLIRPFIASIIFSELRSFAQAFVSYMPDILKTLRLLEEDRYLTNTTYPTSIPGEQIEEYFPFEEFYYLLSSIYTYNVSWISDFWDDIESDMYGFLTWSMGSQIPGIITAFTLLLASLCKNTTSASKIYELFSEPIPEVGHLESLMITSPSWSYIFNVFRYYISHLKPVQTVVTSSGLARVHTDPSEIDTDSALILQAYILLFSSVVRQDAQIASTFCENQDLNPIATLFELLECRLPDSVRICIVRALESLAHLSTGSFNNALWTALDNWFVSSVLFDVDGGLAPMSIPAISKRSLTKPVTSCGPLLNNIRRLTVNLEMKISFVNLLTSLTRNKSELNVNLTFPENLGASYRTPGVQPYVDYVVETFVASSTQWRLMRDVGSIRLQYACLQYMLAVLDGLNIDLLLYSRILSSKVRDNLQNNNLHVYLTRHPAISLLEALYTESVYSGLFDLVEYGFDQLEDVSVPKTIVITVSASLCILRNVLSLQRVLFKNVVPYIAELGISKYILDLTISRRAYKEVFMTRISSIVHLALLVGSRHKCFLRSAIEILSYLVDAEGFMNKRNPDENKLLCSIIRTANESKRIIFGFIRTFESQFLTLLSTNDESSLILKLLLNNLKQSGGVYSLALLILGFDISSTNVITLRDQPGYVGSRVSLMNSLLDFIEGRTIVNGIWETPVIMVQALEIVAFLCSCPLTSEVTLSVIRARPGLLVKMVDGEPILTQQVIQNLGGFSSEEVSMVSRCIRSRTQIMNMLATEIHYAASVGQNKYLNEYVASLIRTNEKTHSTELSQKESGFKILEFMDILRIDPQSITFELPNIPGFNLNMFITRFDRGHSDFQFDTERVLKIYRLFFEAEMTSLGGSAEEKYSWLEQQNSKLKELAQRLNTFNAHVVLLQDIHGCLTAWARLTGLLVDDCNEVISDVHFDDFIWEVLRLVLPGVTVHNLGTQGTVSVTSSVIETILPHALRRIGALKPEELGKSTYFMEGIHDVIVGLLKGIQCQQSDESIRENLYGSLLSILTVFQKHTSANGGDKVDPVFKDAFQKLITPNLLTSQFFDVLTKDALYTNGSCWELSVIILNFLHHVSPDISTHLYKYYLRRNFVSSFIDAFSRAFSELLSSNKDVLEVLSGLEAGQCLLITFAQNKLTVHSVLTFDYIKLMVQMLLQLCKQGGIQYLKPPVQRLMIQLLQIFILVLMRVTLKEISNKDKLLLQSIFLLSRKLQDSVQTGADQALSPEMNTVKKYVETISRLLDLYRD.

Belongs to the NUP186/NUP192/NUP205 family.

The protein resides in the cytoplasm. It is found in the nucleus. In terms of biological role, functions as a component of the nuclear pore complex (NPC). NPC components, collectively referred to as nucleoporins (NUPs), can play the role of both NPC structural components and of docking or interaction partners for transiently associated nuclear transport factors. Active directional transport is assured by both, a Phe-Gly (FG) repeat affinity gradient for these transport factors across the NPC and a transport cofactor concentration gradient across the nuclear envelope. The sequence is that of Nucleoporin nup186 (nup186) from Schizosaccharomyces pombe (strain 972 / ATCC 24843) (Fission yeast).